The primary structure comprises 138 residues: Transcription antitermination protein NusB (138 aa).

This sequence belongs to the NusB family.

Involved in transcription antitermination. Required for transcription of ribosomal RNA (rRNA) genes. Binds specifically to the boxA antiterminator sequence of the ribosomal RNA (rrn) operons. In Colwellia psychrerythraea (strain 34H / ATCC BAA-681) (Vibrio psychroerythus), this protein is Transcription antitermination protein NusB.